A 520-amino-acid polypeptide reads, in one-letter code: 2-isopropylmalate synthase (520 aa).

The 263-residue stretch at 12–274 (VIIFDTTLRD…WNKIDTTQLT (263 aa)) folds into the Pyruvate carboxyltransferase domain. 4 residues coordinate Mn(2+): Asp21, His209, His211, and Asn245. Positions 398 to 520 (KLTSLTVIAG…RDTVTTAAAS (123 aa)) are regulatory domain.

Belongs to the alpha-IPM synthase/homocitrate synthase family. LeuA type 1 subfamily. In terms of assembly, homodimer. Mn(2+) is required as a cofactor.

It is found in the cytoplasm. It catalyses the reaction 3-methyl-2-oxobutanoate + acetyl-CoA + H2O = (2S)-2-isopropylmalate + CoA + H(+). The protein operates within amino-acid biosynthesis; L-leucine biosynthesis; L-leucine from 3-methyl-2-oxobutanoate: step 1/4. Functionally, catalyzes the condensation of the acetyl group of acetyl-CoA with 3-methyl-2-oxobutanoate (2-ketoisovalerate) to form 3-carboxy-3-hydroxy-4-methylpentanoate (2-isopropylmalate). This Bradyrhizobium diazoefficiens (strain JCM 10833 / BCRC 13528 / IAM 13628 / NBRC 14792 / USDA 110) protein is 2-isopropylmalate synthase.